Reading from the N-terminus, the 198-residue chain is GTP-binding protein Di-Ras1 (198 aa).

Residues 17–22, 33–39, 61–65, 121–125, alanine 151, and 151–152 each bind GTP; these read GVGKSS, RDTYIPT, DTTGS, NKCDE, and AK. The short motif at 36-44 is the Effector region element; sequence YIPTIEDTY. At cysteine 195 the chain carries Cysteine methyl ester. Residue cysteine 195 is the site of S-geranylgeranyl cysteine attachment. A propeptide spans 196–198 (removed in mature form); sequence ALM.

This sequence belongs to the small GTPase superfamily. Di-Ras family.

It localises to the cell membrane. In terms of biological role, displays low GTPase activity and exists predominantly in the GTP-bound form. The protein is GTP-binding protein Di-Ras1 (Diras1) of Mus musculus (Mouse).